The following is a 541-amino-acid chain: 5' exonuclease Apollo (541 aa).

K334 is covalently cross-linked (Glycyl lysine isopeptide (Lys-Gly) (interchain with G-Cter in SUMO2)). Residues 455–475 (PLLSRGDSGSPARGNQSDCVG) are disordered. Positions 492–507 (ESRGLALKYLLTPVHF) match the TBM motif.

Belongs to the DNA repair metallo-beta-lactamase (DRMBL) family. As to quaternary structure, interacts with MUS81, MRE11 and FANCD2. Interacts with HSPA2, HSPA8 and HSPA14. Interacts with SPAG5. Interacts with TERF2; the interaction is direct. Post-translationally, ubiquitinated, leading to its degradation. Interaction with TERF2 protects it from ubiquitination.

Its subcellular location is the chromosome. It localises to the telomere. It is found in the nucleus. The protein localises to the cytoplasm. The protein resides in the cytoskeleton. Its subcellular location is the microtubule organizing center. It localises to the centrosome. It catalyses the reaction a beta-lactam + H2O = a substituted beta-amino acid. Functionally, 5'-3' exonuclease that plays a central role in telomere maintenance and protection during S-phase. Participates in the protection of telomeres against non-homologous end-joining (NHEJ)-mediated repair, thereby ensuring that telomeres do not fuse. Plays a key role in telomeric loop (T loop) formation by being recruited by TERF2 at the leading end telomeres and by processing leading-end telomeres immediately after their replication via its exonuclease activity: generates 3' single-stranded overhang at the leading end telomeres avoiding blunt leading-end telomeres that are vulnerable to end-joining reactions and expose the telomere end in a manner that activates the DNA repair pathways. Together with TERF2, required to protect telomeres from replicative damage during replication by controlling the amount of DNA topoisomerase (TOP1, TOP2A and TOP2B) needed for telomere replication during fork passage and prevent aberrant telomere topology. Also involved in response to DNA damage: plays a role in response to DNA interstrand cross-links (ICLs) by facilitating double-strand break formation. In case of spindle stress, involved in prophase checkpoint. Possesses beta-lactamase activity, catalyzing the hydrolysis of penicillin G and nitrocefin. Exhibits no activity towards other beta-lactam antibiotic classes including cephalosporins (cefotaxime) and carbapenems (imipenem). This chain is 5' exonuclease Apollo (Dclre1b), found in Mus musculus (Mouse).